The following is a 247-amino-acid chain: TM2 domain-containing protein 3 (247 aa).

Residues 1 to 25 (MIPMMTLKRVCRVLLFITQMYVLSG) form the signal peptide. Residues 26–179 (RGFLSFEYSE…RTFPKMLYCN (154 aa)) are Extracellular-facing. Asn87, Asn99, Asn139, Asn155, Asn169, and Asn179 each carry an N-linked (GlcNAc...) asparagine glycan. A helical membrane pass occupies residues 180 to 200 (WTGGYKWSTALALSITLGGFG). The TM2 domain occupies 183-231 (GYKWSTALALSITLGGFGADRFYLGQWREGLGKLFSFGGLGIWTLIDVF). The Cytoplasmic portion of the chain corresponds to 201–215 (ADRFYLGQWREGLGK). The chain crosses the membrane as a helical span at residues 216 to 236 (LFSFGGLGIWTLIDVFLISVG). Residues 237–247 (YVGPADGSLYI) are Extracellular-facing.

This sequence belongs to the TM2 family.

It localises to the membrane. This Xenopus tropicalis (Western clawed frog) protein is TM2 domain-containing protein 3 (tm2d3).